The chain runs to 328 residues: MHNAIYTDLQKEVEVILARPRGFCAGVSRAIEIVKLAIEYYKDTKTIYVLHEIVHNKYIVETLKTMGVIFIDKVDQAQDGSVLIYSAHGVSKSIKQLAELRDLEVIDATCPLVNKVHKEVQLYDKSGYQVILIGHKGHREVEGTVGQISTPVIIVQNLNDIDKIEIFDPDKLAYVTQTTLSVDDTKVIIDKLKKKFPNIKGPDLKDICYATQNRQTTTKRLAELVDIVFILGSKNSSNSNRLKELAGIQTQAFLIDSYKEIDLNLLNDITKIGITAGASAPDILVQQVIDFLKQHMKVKLSDLEIVQESVTFNVPRQLRQYKEQYNPI.

Cys-24 lines the [4Fe-4S] cluster pocket. Residues His-55 and His-88 each coordinate (2E)-4-hydroxy-3-methylbut-2-enyl diphosphate. Dimethylallyl diphosphate-binding residues include His-55 and His-88. Positions 55 and 88 each coordinate isopentenyl diphosphate. Residue Cys-110 participates in [4Fe-4S] cluster binding. (2E)-4-hydroxy-3-methylbut-2-enyl diphosphate is bound at residue His-138. His-138 is a binding site for dimethylallyl diphosphate. Residue His-138 coordinates isopentenyl diphosphate. The active-site Proton donor is Glu-140. Thr-178 provides a ligand contact to (2E)-4-hydroxy-3-methylbut-2-enyl diphosphate. Cys-208 lines the [4Fe-4S] cluster pocket. Residues Ser-236, Ser-237, Asn-238, and Ser-279 each contribute to the (2E)-4-hydroxy-3-methylbut-2-enyl diphosphate site. Ser-236, Ser-237, Asn-238, and Ser-279 together coordinate dimethylallyl diphosphate. Ser-236, Ser-237, Asn-238, and Ser-279 together coordinate isopentenyl diphosphate.

The protein belongs to the IspH family. It depends on [4Fe-4S] cluster as a cofactor.

The catalysed reaction is isopentenyl diphosphate + 2 oxidized [2Fe-2S]-[ferredoxin] + H2O = (2E)-4-hydroxy-3-methylbut-2-enyl diphosphate + 2 reduced [2Fe-2S]-[ferredoxin] + 2 H(+). The enzyme catalyses dimethylallyl diphosphate + 2 oxidized [2Fe-2S]-[ferredoxin] + H2O = (2E)-4-hydroxy-3-methylbut-2-enyl diphosphate + 2 reduced [2Fe-2S]-[ferredoxin] + 2 H(+). It functions in the pathway isoprenoid biosynthesis; dimethylallyl diphosphate biosynthesis; dimethylallyl diphosphate from (2E)-4-hydroxy-3-methylbutenyl diphosphate: step 1/1. The protein operates within isoprenoid biosynthesis; isopentenyl diphosphate biosynthesis via DXP pathway; isopentenyl diphosphate from 1-deoxy-D-xylulose 5-phosphate: step 6/6. In terms of biological role, catalyzes the conversion of 1-hydroxy-2-methyl-2-(E)-butenyl 4-diphosphate (HMBPP) into a mixture of isopentenyl diphosphate (IPP) and dimethylallyl diphosphate (DMAPP). Acts in the terminal step of the DOXP/MEP pathway for isoprenoid precursor biosynthesis. In Ehrlichia ruminantium (strain Welgevonden), this protein is 4-hydroxy-3-methylbut-2-enyl diphosphate reductase.